Here is a 90-residue protein sequence, read N- to C-terminus: DNA-binding protein HU (90 aa).

It belongs to the bacterial histone-like protein family. Homodimer.

In terms of biological role, histone-like DNA-binding protein which is capable of wrapping DNA to stabilize it, and thus to prevent its denaturation under extreme environmental conditions. This Haemophilus influenzae (strain ATCC 51907 / DSM 11121 / KW20 / Rd) protein is DNA-binding protein HU (hup).